We begin with the raw amino-acid sequence, 123 residues long: MRPFILLALLFSVAIAFNIFRDEAVPEEQLLSVRRSTRGADKKADSSDSSDSNEKDDKVTEGSGSGDTPVEAEEQLRRVARDVEEASGEEEGSGAAQVTSAPVRFVRSVDVEGSGSGDEAPAE.

The first 16 residues, 1 to 16, serve as a signal peptide directing secretion; the sequence is MRPFILLALLFSVAIA. Residues 32–123 form a disordered region; that stretch reads SVRRSTRGAD…SGSGDEAPAE (92 aa). Basic and acidic residues predominate over residues 38–60; it reads RGADKKADSSDSSDSNEKDDKVT. Ser63 and Ser65 each carry an O-linked (Xyl...) (chondroitin sulfate) serine glycan. Residues 74 to 84 are compositionally biased toward basic and acidic residues; the sequence is EQLRRVARDVE. O-linked (Xyl...) (chondroitin sulfate) serine glycans are attached at residues Ser87, Ser93, and Ser114.

In Caenorhabditis briggsae, this protein is Chondroitin proteoglycan 8 (cpg-8).